Consider the following 219-residue polypeptide: 2,3-bisphosphoglycerate-dependent phosphoglycerate mutase 2 (219 aa).

Residues 8–15 (RHGQSIWN), 21–22 (TG), R58, 85–88 (ERHY), K96, 112–113 (RR), and 156–157 (GN) each bind substrate. H9 functions as the Tele-phosphohistidine intermediate in the catalytic mechanism. Catalysis depends on E85, which acts as the Proton donor/acceptor.

This sequence belongs to the phosphoglycerate mutase family. BPG-dependent PGAM subfamily.

The enzyme catalyses (2R)-2-phosphoglycerate = (2R)-3-phosphoglycerate. Its pathway is carbohydrate degradation; glycolysis; pyruvate from D-glyceraldehyde 3-phosphate: step 3/5. Catalyzes the interconversion of 2-phosphoglycerate and 3-phosphoglycerate. The sequence is that of 2,3-bisphosphoglycerate-dependent phosphoglycerate mutase 2 from Gloeobacter violaceus (strain ATCC 29082 / PCC 7421).